We begin with the raw amino-acid sequence, 277 residues long: MKFIFAFVLCLAVAQTALGAIIGHDKVQPFAQPDPVTISEKAAVKYKPQLVIFDSCVSFPAVNAAGDITGGLKGTSGTDACTKAPLGSQVYGRSTWYQGKWAMMFAWYFPKNFWNLESRSRHLWANMVLWLDNPALETPTILGASLSRQTLEVPKWLFIPSGVQQKNSYSKATPIPPMGFVGTQQIRTARIGRFQYTYNYTGGSTISTRVSQSYPDTSGWVGLDFTYLDGQYQDLIMWNQLTDQARAALESADFGRDTKVPFNDKNFEAALAQAWPF.

The signal sequence occupies residues 1-19 (MKFIFAFVLCLAVAQTALG). The short motif at 119–125 (RSRHLWA) is the Hepta-peptide GHRHDWE motif element. Asn-199 carries N-linked (GlcNAc...) asparagine glycosylation.

Belongs to the Necrosis inducing protein (NPP1) family.

The protein localises to the secreted. Its function is as follows. Secreted effector that contributes strongly to virulence during infection by P.capsici. The sequence is that of NLP effector protein Pc109095 from Phytophthora capsici.